A 307-amino-acid chain; its full sequence is Serine/threonine-protein phosphatase 4 catalytic subunit (307 aa).

Mn(2+) is bound by residues Asp54, His56, Asp82, and Asn114. The active-site Proton donor is His115. 2 residues coordinate Mn(2+): His164 and His238. The residue at position 307 (Leu307) is a Leucine methyl ester.

It belongs to the PPP phosphatase family. PP-4 (PP-X) subfamily. In terms of assembly, serine/threonine-protein phosphatase 4 (PP4) occurs in different assemblies of the catalytic and one or more regulatory subunits. Probably part of a PP4 PPP4C-PPP4R2-PPP4R3 complex containing Pp4-19C, PPP4R2r and flfl. Interacts with Ptpa; thereby mediating basal localization of the Miranda (Mira) complex; probably by dephosphorylation of Mira. Mn(2+) serves as cofactor. Reversibly methyl esterified on Leu-307 by leucine carboxyl methyltransferase 1 (LCMT1) and protein phosphatase methylesterase 1 (PPME1). Carboxyl methylation influences the affinity of the catalytic subunit for the different regulatory subunits, thereby modulating the PP2A holoenzyme's substrate specificity, enzyme activity and cellular localization.

It is found in the cytoplasm. The protein resides in the nucleus. Its subcellular location is the cytoskeleton. The protein localises to the microtubule organizing center. It localises to the centrosome. It carries out the reaction O-phospho-L-seryl-[protein] + H2O = L-seryl-[protein] + phosphate. It catalyses the reaction O-phospho-L-threonyl-[protein] + H2O = L-threonyl-[protein] + phosphate. Its function is as follows. Protein phosphatase that regulates many processes such as microtubule organization at centrosomes. The probable PP4 complex Pp4-19C-PPP4R2r-flfl (PPP4C-PPP4R2-PPP4R3) is required to prevent caspase-induced cell death (in vitro). The protein is Serine/threonine-protein phosphatase 4 catalytic subunit (Pp4-19C) of Drosophila melanogaster (Fruit fly).